The sequence spans 400 residues: MDRYDFPDAQGHFGPYGGVYVAETLMVALDQLKEEYARVKADPTFWQEFHHELKHYVGRPSPVYHAKRWSEQLGGAQIWFKREDLNHTGAHKINNAIGQALLARRMGKKRVIAETGAGQHGVATATVAARYGMECVVYMGAEDVKRQSPNVFRMKLLGATVVPVESGSKTLKDALNEAMRDWVTNVDSTFYILGTAAGPHPYPMLVRDFVSVIGAESKIQMPEAIGRQPDVVVACVGGGSNAIGMFHPYIEVPGVRMVGVEAGGHGVASGKHAAPISSGAPVGVLHGSKSYLMQDADGQIVETHSVSAGLDYPGVGPEHCHLKDIGRAEYVSIDDDEALRAFHDCCHLEGIIPALESSHALAWAAKVAPSMGKDQVILVNLSGRGDKDINTVAGLAGITL.

Lys-92 bears the N6-(pyridoxal phosphate)lysine mark.

This sequence belongs to the TrpB family. In terms of assembly, tetramer of two alpha and two beta chains. Pyridoxal 5'-phosphate is required as a cofactor.

The catalysed reaction is (1S,2R)-1-C-(indol-3-yl)glycerol 3-phosphate + L-serine = D-glyceraldehyde 3-phosphate + L-tryptophan + H2O. It participates in amino-acid biosynthesis; L-tryptophan biosynthesis; L-tryptophan from chorismate: step 5/5. Its function is as follows. The beta subunit is responsible for the synthesis of L-tryptophan from indole and L-serine. The protein is Tryptophan synthase beta chain of Chromobacterium violaceum (strain ATCC 12472 / DSM 30191 / JCM 1249 / CCUG 213 / NBRC 12614 / NCIMB 9131 / NCTC 9757 / MK).